Reading from the N-terminus, the 221-residue chain is Orotate phosphoribosyltransferase (221 aa).

Position 26 (lysine 26) interacts with 5-phospho-alpha-D-ribose 1-diphosphate. An orotate-binding site is contributed by 34–35; that stretch reads FF. 5-phospho-alpha-D-ribose 1-diphosphate contacts are provided by residues 72–73, arginine 98, lysine 99, lysine 102, histidine 104, and 123–131; these read YK and DDVISAGTS. Serine 127 and arginine 155 together coordinate orotate.

This sequence belongs to the purine/pyrimidine phosphoribosyltransferase family. PyrE subfamily. In terms of assembly, homodimer. It depends on Mg(2+) as a cofactor.

The catalysed reaction is orotidine 5'-phosphate + diphosphate = orotate + 5-phospho-alpha-D-ribose 1-diphosphate. It participates in pyrimidine metabolism; UMP biosynthesis via de novo pathway; UMP from orotate: step 1/2. Its function is as follows. Catalyzes the transfer of a ribosyl phosphate group from 5-phosphoribose 1-diphosphate to orotate, leading to the formation of orotidine monophosphate (OMP). The polypeptide is Orotate phosphoribosyltransferase (Herminiimonas arsenicoxydans).